The chain runs to 326 residues: MSTKIAVLGGGAWGTALAAMAAKGGHESWLYARDAETVVAINKDRRNPRYLGDITLADGIRASTDAAAVVTGADAVLAVIPAQAMRNGLSELGTLIPQASPIVLCAKGIEQNTGRLMSEVVAEILPDHRIAALSGPSFASDVARGLPTAVTVACEDANTADRLAALLSGPAFRCYSTTDLKGVETGGALKNVLAIAAGAAIGRGYGASAQAALVTRGFAELRRIGQAMSARPETIMGLSGLGDLMLTCSSSQSRNYSYGLALGRGEDLTSRPLAEGVATAPIAAELCRKHNISAPIIDAVGALLDGKITIDEAVTALLNRPLKTED.

Positions 13, 33, and 107 each coordinate NADPH. Sn-glycerol 3-phosphate is bound by residues Lys-107, Gly-135, and Ser-137. Ala-139 is an NADPH binding site. Sn-glycerol 3-phosphate is bound by residues Lys-190, Asp-243, Ser-253, Arg-254, and Asn-255. The active-site Proton acceptor is Lys-190. Arg-254 provides a ligand contact to NADPH. Positions 273 and 275 each coordinate NADPH.

The protein belongs to the NAD-dependent glycerol-3-phosphate dehydrogenase family.

The protein resides in the cytoplasm. It catalyses the reaction sn-glycerol 3-phosphate + NAD(+) = dihydroxyacetone phosphate + NADH + H(+). It carries out the reaction sn-glycerol 3-phosphate + NADP(+) = dihydroxyacetone phosphate + NADPH + H(+). It functions in the pathway membrane lipid metabolism; glycerophospholipid metabolism. Catalyzes the reduction of the glycolytic intermediate dihydroxyacetone phosphate (DHAP) to sn-glycerol 3-phosphate (G3P), the key precursor for phospholipid synthesis. This chain is Glycerol-3-phosphate dehydrogenase [NAD(P)+], found in Brucella abortus (strain 2308).